A 494-amino-acid polypeptide reads, in one-letter code: DnaJ homolog subfamily C member 7 (494 aa).

A2 bears the N-acetylalanine mark. 8 TPR repeats span residues A28–N61, A62–F95, V96–N129, V142–C175, A210–H243, L256–N289, A294–Y327, and I328–K361. Positions D381–Q451 constitute a J domain. A Phosphoserine modification is found at S393.

Associates with complexes containing chaperones HSP70 and HSP90. Interacts with the GAP domain of NF1. Interacts with HSP90AA1. Interacts with HSPA1A/B; the interaction is enhanced by ATP. Interacts with HSP90AB1. Interacts with PGR. Interacts with RAD9A; the interaction is interrupted by UV and heat shock treatments. Interacts with HUS1 and RAD1. Interacts with NR1I3; this complex may also include HSP90 Interacts with HSPA8. As to expression, widely expressed with high levels in liver, skeletal muscle, kidney and testis.

It localises to the cytoplasm. Its subcellular location is the nucleus. The protein localises to the cytoskeleton. In terms of biological role, acts as a co-chaperone regulating the molecular chaperones HSP70 and HSP90 in folding of steroid receptors, such as the glucocorticoid receptor and the progesterone receptor. Proposed to act as a recycling chaperone by facilitating the return of chaperone substrates to early stages of chaperoning if further folding is required. In vitro, induces ATP-independent dissociation of HSP90 but not of HSP70 from the chaperone-substrate complexes. Recruits NR1I3 to the cytoplasm. The chain is DnaJ homolog subfamily C member 7 (Dnajc7) from Mus musculus (Mouse).